Here is a 300-residue protein sequence, read N- to C-terminus: Apolipoprotein E (300 aa).

An N-terminal signal peptide occupies residues 1-18; the sequence is MKVLWAVLVVTLLAGCQA. The interval 74–246 is 8 X 22 AA approximate tandem repeats; it reads VLMEDTMKEV…RLDEVREQME (173 aa). Tandem repeats lie at residues 75 to 95, 96 to 117, 118 to 139, 140 to 161, 162 to 183, 184 to 205, 206 to 224, and 225 to 243. At Met-137 the chain carries Methionine sulfoxide. Ser-141 bears the Phosphoserine mark. The interval 152–162 is LDL and other lipoprotein receptors binding; the sequence is HLRKLRKRLLR. 156–159 contributes to the heparin binding site; that stretch reads LRKR. The segment at 204 to 274 is lipid-binding and lipoprotein association; sequence TAALTSQPLQ…GWFEPMMEDI (71 aa). Position 220-227 (220-227) interacts with heparin; that stretch reads GERLRGRL. The interval 262–274 is specificity for association with VLDL; it reads RLKGWFEPMMEDI.

Belongs to the apolipoprotein A1/A4/E family. As to quaternary structure, homotetramer. May interact with ABCA1; functionally associated with ABCA1 in the biogenesis of HDLs. May interact with APP/A4 amyloid-beta peptide; the interaction is extremely stable in vitro but its physiological significance is unclear. May interact with MAPT. May interact with MAP2. In the cerebrospinal fluid, interacts with secreted SORL1. Interacts with PMEL; this allows the loading of PMEL luminal fragment on ILVs to induce fibril nucleation. APOE exists as multiple glycosylated and sialylated glycoforms within cells and in plasma. The extent of glycosylation and sialylation are tissue and context specific. Post-translationally, glycated in plasma VLDL. In terms of processing, phosphorylated by FAM20C in the extracellular medium.

The protein resides in the secreted. It is found in the extracellular space. Its subcellular location is the extracellular matrix. It localises to the extracellular vesicle. The protein localises to the endosome. The protein resides in the multivesicular body. Its function is as follows. APOE is an apolipoprotein, a protein associating with lipid particles, that mainly functions in lipoprotein-mediated lipid transport between organs via the plasma and interstitial fluids. APOE is a core component of plasma lipoproteins and is involved in their production, conversion and clearance. Apolipoproteins are amphipathic molecules that interact both with lipids of the lipoprotein particle core and the aqueous environment of the plasma. As such, APOE associates with chylomicrons, chylomicron remnants, very low density lipoproteins (VLDL) and intermediate density lipoproteins (IDL) but shows a preferential binding to high-density lipoproteins (HDL). It also binds a wide range of cellular receptors including the LDL receptor/LDLR, the LDL receptor-related proteins LRP1, LRP2 and LRP8 and the very low-density lipoprotein receptor/VLDLR that mediate the cellular uptake of the APOE-containing lipoprotein particles. Finally, APOE also has a heparin-binding activity and binds heparan-sulfate proteoglycans on the surface of cells, a property that supports the capture and the receptor-mediated uptake of APOE-containing lipoproteins by cells. A main function of APOE is to mediate lipoprotein clearance through the uptake of chylomicrons, VLDLs, and HDLs by hepatocytes. APOE is also involved in the biosynthesis by the liver of VLDLs as well as their uptake by peripheral tissues ensuring the delivery of triglycerides and energy storage in muscle, heart and adipose tissues. By participating in the lipoprotein-mediated distribution of lipids among tissues, APOE plays a critical role in plasma and tissues lipid homeostasis. APOE is also involved in two steps of reverse cholesterol transport, the HDLs-mediated transport of cholesterol from peripheral tissues to the liver, and thereby plays an important role in cholesterol homeostasis. First, it is functionally associated with ABCA1 in the biogenesis of HDLs in tissues. Second, it is enriched in circulating HDLs and mediates their uptake by hepatocytes. APOE also plays an important role in lipid transport in the central nervous system, regulating neuron survival and sprouting. The polypeptide is Apolipoprotein E (APOE) (Dinomys branickii (Pacarana)).